Consider the following 507-residue polypeptide: ATP synthase subunit alpha, chloroplastic (507 aa).

Position 170 to 177 (Ile-170 to Lys-177) interacts with ATP.

This sequence belongs to the ATPase alpha/beta chains family. F-type ATPases have 2 components, CF(1) - the catalytic core - and CF(0) - the membrane proton channel. CF(1) has five subunits: alpha(3), beta(3), gamma(1), delta(1), epsilon(1). CF(0) has four main subunits: a, b, b' and c.

The protein localises to the plastid. The protein resides in the chloroplast thylakoid membrane. It carries out the reaction ATP + H2O + 4 H(+)(in) = ADP + phosphate + 5 H(+)(out). Its function is as follows. Produces ATP from ADP in the presence of a proton gradient across the membrane. The alpha chain is a regulatory subunit. The chain is ATP synthase subunit alpha, chloroplastic from Adiantum capillus-veneris (Maidenhair fern).